We begin with the raw amino-acid sequence, 360 residues long: Phospho-N-acetylmuramoyl-pentapeptide-transferase (360 aa).

10 helical membrane-spanning segments follow: residues 27–47 (GAMI…INSL), 71–91 (TPTM…LLWA), 93–113 (LASV…AIGF), 128–148 (FSGK…AFVI), 168–188 (FVVN…VGAG), 199–219 (GLAI…AYLS), 239–259 (LAVV…FNAP), 262–282 (AIFM…TVAV), 288–308 (IVLA…IIQV), and 337–357 (QVVI…LSTL).

Belongs to the glycosyltransferase 4 family. MraY subfamily. Requires Mg(2+) as cofactor.

The protein localises to the cell inner membrane. It carries out the reaction UDP-N-acetyl-alpha-D-muramoyl-L-alanyl-gamma-D-glutamyl-meso-2,6-diaminopimeloyl-D-alanyl-D-alanine + di-trans,octa-cis-undecaprenyl phosphate = di-trans,octa-cis-undecaprenyl diphospho-N-acetyl-alpha-D-muramoyl-L-alanyl-D-glutamyl-meso-2,6-diaminopimeloyl-D-alanyl-D-alanine + UMP. The protein operates within cell wall biogenesis; peptidoglycan biosynthesis. Catalyzes the initial step of the lipid cycle reactions in the biosynthesis of the cell wall peptidoglycan: transfers peptidoglycan precursor phospho-MurNAc-pentapeptide from UDP-MurNAc-pentapeptide onto the lipid carrier undecaprenyl phosphate, yielding undecaprenyl-pyrophosphoryl-MurNAc-pentapeptide, known as lipid I. The sequence is that of Phospho-N-acetylmuramoyl-pentapeptide-transferase from Brucella anthropi (strain ATCC 49188 / DSM 6882 / CCUG 24695 / JCM 21032 / LMG 3331 / NBRC 15819 / NCTC 12168 / Alc 37) (Ochrobactrum anthropi).